The chain runs to 349 residues: Ribosomal RNA small subunit methyltransferase H 1 (349 aa).

Residues 79 to 81 (GGH), aspartate 99, phenylalanine 129, aspartate 148, and glutamine 155 contribute to the S-adenosyl-L-methionine site.

Belongs to the methyltransferase superfamily. RsmH family.

Its subcellular location is the cytoplasm. The enzyme catalyses cytidine(1402) in 16S rRNA + S-adenosyl-L-methionine = N(4)-methylcytidine(1402) in 16S rRNA + S-adenosyl-L-homocysteine + H(+). In terms of biological role, specifically methylates the N4 position of cytidine in position 1402 (C1402) of 16S rRNA. The protein is Ribosomal RNA small subunit methyltransferase H 1 of Agathobacter rectalis (strain ATCC 33656 / DSM 3377 / JCM 17463 / KCTC 5835 / VPI 0990) (Eubacterium rectale).